The chain runs to 258 residues: SMH class II histocompatibility antigen, beta-1 chain (258 aa).

Residues 1-29 (MMVLPVPVAPWTAALTVLLMVLNKSVVQG) form the signal peptide. Residues 30 to 121 (RTTPENYLFR…LNQRLSQSLI (92 aa)) form a beta-1 region. Over 30–225 (RTTPENYLFR…RAQSDSARNK (196 aa)) the chain is Extracellular. Intrachain disulfides connect Cys-44–Cys-106 and Cys-144–Cys-200. A beta-2 region spans residues 122–215 (AQPKVHVSPS…SLDRPITVEW (94 aa)). Residues 124 to 212 (PKVHVSPSKG…EHPSLDRPIT (89 aa)) enclose the Ig-like C1-type domain. Positions 216-225 (RAQSDSARNK) are connecting peptide. A glycan (N-linked (GlcNAc...) asparagine) is linked at Asn-224. Residues 226–246 (TLTGVGGLVLGLIFLAVGLIM) traverse the membrane as a helical segment. At 247 to 258 (HVRSKKAQRGSR) the chain is on the cytoplasmic side.

It belongs to the MHC class II family.

Its subcellular location is the membrane. The sequence is that of SMH class II histocompatibility antigen, beta-1 chain from Spalax ehrenbergi (Middle East blind mole rat).